Here is a 331-residue protein sequence, read N- to C-terminus: Adenosine deaminase (331 aa).

H12 and H14 together coordinate Zn(2+). Residues H14 and D16 each coordinate substrate. H197 is a Zn(2+) binding site. E200 serves as the catalytic Proton donor. Position 278 (D278) interacts with Zn(2+).

This sequence belongs to the metallo-dependent hydrolases superfamily. Adenosine and AMP deaminases family. Adenosine deaminase subfamily. The cofactor is Zn(2+).

It carries out the reaction adenosine + H2O + H(+) = inosine + NH4(+). It catalyses the reaction 2'-deoxyadenosine + H2O + H(+) = 2'-deoxyinosine + NH4(+). In terms of biological role, catalyzes the hydrolytic deamination of adenosine and 2-deoxyadenosine. This Shewanella pealeana (strain ATCC 700345 / ANG-SQ1) protein is Adenosine deaminase.